A 161-amino-acid chain; its full sequence is Globin CTT-VIIB-6 (161 aa).

The first 16 residues, 1–16 (MKFFAVLALCIVGAIA), serve as a signal peptide directing secretion. In terms of domain architecture, Globin spans 18–161 (PLTADEASLV…NTFAIVVPRL (144 aa)). Residues histidine 76 and histidine 111 each coordinate heme b.

It belongs to the globin family. Homodimer.

This Chironomus thummi thummi (Midge) protein is Globin CTT-VIIB-6 (CTT-7B6).